We begin with the raw amino-acid sequence, 185 residues long: Putative lipoprotein LprB (185 aa).

The N-terminal stretch at 1–24 (MRRKVRRLTLAVSALVALFPAVAG) is a signal peptide. Cysteine 25 carries the N-palmitoyl cysteine lipid modification. Cysteine 25 is lipidated: S-diacylglycerol cysteine. The tract at residues 26–50 (SDSGDNKPGATIPSTPANAEGRHGP) is disordered.

The protein resides in the cell membrane. This chain is Putative lipoprotein LprB (lprB), found in Mycobacterium tuberculosis (strain CDC 1551 / Oshkosh).